Reading from the N-terminus, the 321-residue chain is Outer envelope protein 36, chloroplastic (321 aa).

This sequence belongs to the OEP80 (TC 1.B.33.2) family. In terms of tissue distribution, expressed in germinating seeds.

It localises to the plastid. Its subcellular location is the chloroplast outer membrane. Its function is as follows. May play a role during plastid development. This Arabidopsis thaliana (Mouse-ear cress) protein is Outer envelope protein 36, chloroplastic.